The primary structure comprises 196 residues: Nucleoside triphosphate pyrophosphatase (196 aa).

Asp73 (proton acceptor) is an active-site residue.

Belongs to the Maf family. A divalent metal cation serves as cofactor.

It is found in the cytoplasm. The catalysed reaction is a ribonucleoside 5'-triphosphate + H2O = a ribonucleoside 5'-phosphate + diphosphate + H(+). It catalyses the reaction a 2'-deoxyribonucleoside 5'-triphosphate + H2O = a 2'-deoxyribonucleoside 5'-phosphate + diphosphate + H(+). Functionally, nucleoside triphosphate pyrophosphatase. May have a dual role in cell division arrest and in preventing the incorporation of modified nucleotides into cellular nucleic acids. This Maricaulis maris (strain MCS10) (Caulobacter maris) protein is Nucleoside triphosphate pyrophosphatase.